The primary structure comprises 334 residues: Heat-inducible transcription repressor HrcA (334 aa).

It belongs to the HrcA family.

Negative regulator of class I heat shock genes (grpE-dnaK-dnaJ and groELS operons). Prevents heat-shock induction of these operons. In Acidovorax ebreus (strain TPSY) (Diaphorobacter sp. (strain TPSY)), this protein is Heat-inducible transcription repressor HrcA.